The following is a 117-amino-acid chain: uncharacterized protein (117 aa).

The tract at residues 96 to 117 is disordered; sequence RKGGASKHRTLSAETGIRGEGE.

This is an uncharacterized protein from Saccharomyces cerevisiae (strain ATCC 204508 / S288c) (Baker's yeast).